A 283-amino-acid polypeptide reads, in one-letter code: MSAKIMDGKSIAQQIKNEVAHGVQKRLKQGKRAPGLAVILIGENSASQIYVANKRKACEEVGFVSHCYPLPETTSKAELVSLIKQLNQDPEIDGILVQLPLPERFDSANMLEQIRPDKDVDGFHPYNIGSLCQRIPKLRPCTPLGIMTLLARYDLDPCGLNALVVGASNIVGRPMSLELLLAGCTTTVAHRFTQHLQQHVENADLLVVAVGKPSFIPGTWIKPGAIVIDVGINRLQNGRVVGDVEFDMAATRAAWITPVPGGVGPMTVASLLQNTLKACMERT.

Residues 166 to 168 (GAS) and Ile-232 contribute to the NADP(+) site.

Belongs to the tetrahydrofolate dehydrogenase/cyclohydrolase family. In terms of assembly, homodimer.

The catalysed reaction is (6R)-5,10-methylene-5,6,7,8-tetrahydrofolate + NADP(+) = (6R)-5,10-methenyltetrahydrofolate + NADPH. The enzyme catalyses (6R)-5,10-methenyltetrahydrofolate + H2O = (6R)-10-formyltetrahydrofolate + H(+). The protein operates within one-carbon metabolism; tetrahydrofolate interconversion. Its function is as follows. Catalyzes the oxidation of 5,10-methylenetetrahydrofolate to 5,10-methenyltetrahydrofolate and then the hydrolysis of 5,10-methenyltetrahydrofolate to 10-formyltetrahydrofolate. This Hamiltonella defensa subsp. Acyrthosiphon pisum (strain 5AT) protein is Bifunctional protein FolD.